The chain runs to 334 residues: Protein RecA (334 aa).

Position 65-72 (65-72) interacts with ATP; that stretch reads GNESSGKT.

This sequence belongs to the RecA family.

Its subcellular location is the cytoplasm. Can catalyze the hydrolysis of ATP in the presence of single-stranded DNA, the ATP-dependent uptake of single-stranded DNA by duplex DNA, and the ATP-dependent hybridization of homologous single-stranded DNAs. It interacts with LexA causing its activation and leading to its autocatalytic cleavage. The protein is Protein RecA of Ureaplasma parvum serovar 3 (strain ATCC 27815 / 27 / NCTC 11736).